A 697-amino-acid chain; its full sequence is Pentatricopeptide repeat-containing protein 1, mitochondrial (697 aa).

Residues 1–36 constitute a mitochondrion transit peptide; the sequence is MLKRAHYVALHVTLNHNGLSYQRVFSCLTQFPMLRH. 2 PPR repeats span residues 257 to 288 and 294 to 328; these read RPFT…VKNK and SDVF…NVNF.

It localises to the mitochondrion. Mitochondrial RNA-binding protein required for the stability of the cox2 and cox3 mRNAs. In Schizosaccharomyces pombe (strain 972 / ATCC 24843) (Fission yeast), this protein is Pentatricopeptide repeat-containing protein 1, mitochondrial (ppr1).